The chain runs to 446 residues: Bifunctional protein GlmU (446 aa).

The tract at residues 1–225 is pyrophosphorylase; the sequence is MEGIILAAGK…ETEVYGVNDR (225 aa). UDP-N-acetyl-alpha-D-glucosamine contacts are provided by residues 6-9, K20, Q70, and 75-76; these read LAAG and GT. D98 serves as a coordination point for Mg(2+). Residues G135, E150, N165, and N223 each coordinate UDP-N-acetyl-alpha-D-glucosamine. N223 is a Mg(2+) binding site. Residues 226–246 form a linker region; that stretch reads VQLARLTKGVYRRKAEALMQE. The segment at 247–446 is N-acetyltransferase; sequence GVTIIDPETV…RQVNKEDYVK (200 aa). UDP-N-acetyl-alpha-D-glucosamine-binding residues include R328 and K346. The active-site Proton acceptor is the H358. Positions 361 and 372 each coordinate UDP-N-acetyl-alpha-D-glucosamine. Acetyl-CoA contacts are provided by residues A375, 381-382, S400, A418, and R435; that span reads NY.

In the N-terminal section; belongs to the N-acetylglucosamine-1-phosphate uridyltransferase family. It in the C-terminal section; belongs to the transferase hexapeptide repeat family. Homotrimer. Requires Mg(2+) as cofactor.

The protein resides in the cytoplasm. The catalysed reaction is alpha-D-glucosamine 1-phosphate + acetyl-CoA = N-acetyl-alpha-D-glucosamine 1-phosphate + CoA + H(+). It catalyses the reaction N-acetyl-alpha-D-glucosamine 1-phosphate + UTP + H(+) = UDP-N-acetyl-alpha-D-glucosamine + diphosphate. It functions in the pathway nucleotide-sugar biosynthesis; UDP-N-acetyl-alpha-D-glucosamine biosynthesis; N-acetyl-alpha-D-glucosamine 1-phosphate from alpha-D-glucosamine 6-phosphate (route II): step 2/2. It participates in nucleotide-sugar biosynthesis; UDP-N-acetyl-alpha-D-glucosamine biosynthesis; UDP-N-acetyl-alpha-D-glucosamine from N-acetyl-alpha-D-glucosamine 1-phosphate: step 1/1. The protein operates within bacterial outer membrane biogenesis; LPS lipid A biosynthesis. In terms of biological role, catalyzes the last two sequential reactions in the de novo biosynthetic pathway for UDP-N-acetylglucosamine (UDP-GlcNAc). The C-terminal domain catalyzes the transfer of acetyl group from acetyl coenzyme A to glucosamine-1-phosphate (GlcN-1-P) to produce N-acetylglucosamine-1-phosphate (GlcNAc-1-P), which is converted into UDP-GlcNAc by the transfer of uridine 5-monophosphate (from uridine 5-triphosphate), a reaction catalyzed by the N-terminal domain. In Carboxydothermus hydrogenoformans (strain ATCC BAA-161 / DSM 6008 / Z-2901), this protein is Bifunctional protein GlmU.